The following is a 323-amino-acid chain: Ribosomal RNA small subunit methyltransferase H (323 aa).

S-adenosyl-L-methionine-binding positions include 39–41 (GGY), aspartate 57, phenylalanine 84, aspartate 103, and glutamine 110.

This sequence belongs to the methyltransferase superfamily. RsmH family.

It localises to the cytoplasm. It catalyses the reaction cytidine(1402) in 16S rRNA + S-adenosyl-L-methionine = N(4)-methylcytidine(1402) in 16S rRNA + S-adenosyl-L-homocysteine + H(+). Specifically methylates the N4 position of cytidine in position 1402 (C1402) of 16S rRNA. This is Ribosomal RNA small subunit methyltransferase H from Gluconobacter oxydans (strain 621H) (Gluconobacter suboxydans).